A 505-amino-acid polypeptide reads, in one-letter code: Catalase (505 aa).

The segment at 1-25 (MSQQDKKLTGVFGHPVSDRENSMTA) is disordered. Residues histidine 56 and asparagine 129 contribute to the active site. Residue tyrosine 339 participates in heme binding.

Belongs to the catalase family. In terms of assembly, homodimer. It depends on heme as a cofactor.

It carries out the reaction 2 H2O2 = O2 + 2 H2O. In terms of biological role, decomposes hydrogen peroxide into water and oxygen; serves to protect cells from the toxic effects of hydrogen peroxide. In Staphylococcus aureus, this protein is Catalase (katA).